A 419-amino-acid chain; its full sequence is UPF0229 protein Tbd_1233 (419 aa).

Residues 85 to 108 form a disordered region; that stretch reads GDRIDRPAGEGGGGSGGSPDGEGM. The span at 93–104 shows a compositional bias: gly residues; the sequence is GEGGGGSGGSPD.

This sequence belongs to the UPF0229 family.

The sequence is that of UPF0229 protein Tbd_1233 from Thiobacillus denitrificans (strain ATCC 25259 / T1).